Consider the following 474-residue polypeptide: PRAME family member 7 (474 aa).

The LRR 1; degenerate repeat unit spans residues 97–122 (QSKLQVLDLRNVDENFCDIFSGATAS). One copy of the LRR 2; degenerate repeat lies at 177–201 (HVCCKELQVFGMPIHSIIEVLNMVE). An LRR 3; degenerate repeat occupies 202–228 (LDCIQEVEVCCPWELSTLVKFAPYLGQ). One copy of the LRR 4; degenerate repeat lies at 229–264 (MRNLRKLVLFNIRASACIPPDNKGQFIARFTSQFLK). 5 LRR repeats span residues 265–290 (LDYF…LRCL), 291–322 (QASL…RQLK), 323–341 (ELDL…PLTG), 347–374 (VATL…VLSR), and 375–399 (CSQL…LLRH).

The protein belongs to the PRAME family.

In Homo sapiens (Human), this protein is PRAME family member 7.